The chain runs to 686 residues: Putative pentatricopeptide repeat-containing protein At3g49142 (686 aa).

PPR repeat units lie at residues 73-103 (NSSL…IPER), 104-138 (NVII…NVRP), 139-173 (DHYT…GLSS), 174-204 (TLFV…MSRR), 205-239 (DVVS…KISH), 240-272 (DAGT…MGKK), 273-307 (SLVS…GFEP), 308-342 (DAVS…KLIP), 343-373 (NLLL…MKSR), 374-408 (DVVS…GLVP), 409-439 (DSIA…MTDH), and 445-475 (RLEH…MSME). The tract at residues 480–555 (VWGALLGACR…NPGASNVEVN (76 aa)) is type E motif. Positions 556-586 (RIIHTFLVGDRSHPQSDEIYRELDVLVKKMK) are type E(+) motif. A type DYW motif region spans residues 587-686 (ELGYVPDSES…FGVCSCGDYW (100 aa)).

The protein belongs to the PPR family. PCMP-H subfamily.

The protein is Putative pentatricopeptide repeat-containing protein At3g49142 (PCMP-H77) of Arabidopsis thaliana (Mouse-ear cress).